A 396-amino-acid chain; its full sequence is 1-deoxy-D-xylulose 5-phosphate reductoisomerase (396 aa).

Positions 15, 16, 17, 18, 41, and 129 each coordinate NADPH. 1-deoxy-D-xylulose 5-phosphate is bound at residue Lys-130. Glu-131 provides a ligand contact to NADPH. A Mn(2+)-binding site is contributed by Asp-155. The 1-deoxy-D-xylulose 5-phosphate site is built by Ser-156, Glu-157, Ser-182, and His-205. Glu-157 serves as a coordination point for Mn(2+). An NADPH-binding site is contributed by Gly-211. Residues Ser-218, Asn-223, Lys-224, and Glu-227 each coordinate 1-deoxy-D-xylulose 5-phosphate. Glu-227 provides a ligand contact to Mn(2+).

The protein belongs to the DXR family. The cofactor is Mg(2+). Mn(2+) is required as a cofactor.

It catalyses the reaction 2-C-methyl-D-erythritol 4-phosphate + NADP(+) = 1-deoxy-D-xylulose 5-phosphate + NADPH + H(+). It participates in isoprenoid biosynthesis; isopentenyl diphosphate biosynthesis via DXP pathway; isopentenyl diphosphate from 1-deoxy-D-xylulose 5-phosphate: step 1/6. Its function is as follows. Catalyzes the NADPH-dependent rearrangement and reduction of 1-deoxy-D-xylulose-5-phosphate (DXP) to 2-C-methyl-D-erythritol 4-phosphate (MEP). The polypeptide is 1-deoxy-D-xylulose 5-phosphate reductoisomerase (Xanthomonas oryzae pv. oryzae (strain PXO99A)).